Here is a 173-residue protein sequence, read N- to C-terminus: Pyridoxal 5'-phosphate synthase subunit PdxT (173 aa).

Residue 49–51 (GES) coordinates L-glutamine. Cys-81 acts as the Nucleophile in catalysis. L-glutamine contacts are provided by residues Arg-113 and 141 to 142 (IR).

It belongs to the glutaminase PdxT/SNO family. In the presence of PdxS, forms a dodecamer of heterodimers. Only shows activity in the heterodimer.

The catalysed reaction is aldehydo-D-ribose 5-phosphate + D-glyceraldehyde 3-phosphate + L-glutamine = pyridoxal 5'-phosphate + L-glutamate + phosphate + 3 H2O + H(+). It carries out the reaction L-glutamine + H2O = L-glutamate + NH4(+). It functions in the pathway cofactor biosynthesis; pyridoxal 5'-phosphate biosynthesis. Its function is as follows. Catalyzes the hydrolysis of glutamine to glutamate and ammonia as part of the biosynthesis of pyridoxal 5'-phosphate. The resulting ammonia molecule is channeled to the active site of PdxS. This Mycolicibacterium paratuberculosis (strain ATCC BAA-968 / K-10) (Mycobacterium paratuberculosis) protein is Pyridoxal 5'-phosphate synthase subunit PdxT.